Here is a 252-residue protein sequence, read N- to C-terminus: 3-dehydroquinate dehydratase (252 aa).

Residues serine 21, glutamate 46–arginine 48, and arginine 82 contribute to the 3-dehydroquinate site. Catalysis depends on histidine 143, which acts as the Proton donor/acceptor. The Schiff-base intermediate with substrate role is filled by lysine 170. 3 residues coordinate 3-dehydroquinate: arginine 213, serine 232, and glutamine 236.

The protein belongs to the type-I 3-dehydroquinase family. In terms of assembly, homodimer.

The catalysed reaction is 3-dehydroquinate = 3-dehydroshikimate + H2O. Its pathway is metabolic intermediate biosynthesis; chorismate biosynthesis; chorismate from D-erythrose 4-phosphate and phosphoenolpyruvate: step 3/7. In terms of biological role, involved in the third step of the chorismate pathway, which leads to the biosynthesis of aromatic amino acids. Catalyzes the cis-dehydration of 3-dehydroquinate (DHQ) and introduces the first double bond of the aromatic ring to yield 3-dehydroshikimate. The chain is 3-dehydroquinate dehydratase from Salmonella paratyphi A (strain ATCC 9150 / SARB42).